The primary structure comprises 588 residues: Lysine--tRNA ligase (588 aa).

The span at 1 to 10 shows a compositional bias: polar residues; it reads MDSSVSTEPL. The disordered stretch occupies residues 1–54; that stretch reads MDSSVSTEPLSKNALKREKKAKEKEQLEQEKKAAAVAKRQMEQHNLPENDDLDP. Positions 20-47 are enriched in basic and acidic residues; that stretch reads KAKEKEQLEQEKKAAAVAKRQMEQHNLP.

The protein belongs to the class-II aminoacyl-tRNA synthetase family.

Its subcellular location is the cytoplasm. The enzyme catalyses tRNA(Lys) + L-lysine + ATP = L-lysyl-tRNA(Lys) + AMP + diphosphate. The polypeptide is Lysine--tRNA ligase (LYSRS) (Solanum lycopersicum (Tomato)).